The chain runs to 330 residues: Cytosolic iron-sulfur protein assembly protein 1 (330 aa).

WD repeat units follow at residues 12 to 53 (LYKE…DVLD), 56 to 95 (AHKK…DRTF), 105 to 144 (GHEN…EEYE), 151 to 190 (EHSQ…WECV), 195 to 236 (GHEG…EDDQ), 248 to 286 (VHKR…WKVF), and 292 to 330 (CHGV…EKAA).

The protein belongs to the WD repeat CIA1 family. In terms of assembly, interacts with NAR1.

It localises to the cytoplasm. It is found in the nucleus. Its function is as follows. Essential component of the cytosolic iron-sulfur (Fe/S) protein assembly machinery. Required for the maturation of extramitochondrial Fe/S proteins. This is Cytosolic iron-sulfur protein assembly protein 1 from Saccharomyces cerevisiae (strain ATCC 204508 / S288c) (Baker's yeast).